The primary structure comprises 269 residues: Formamidopyrimidine-DNA glycosylase (269 aa).

The Schiff-base intermediate with DNA role is filled by Pro-2. Glu-3 serves as the catalytic Proton donor. Lys-57 acts as the Proton donor; for beta-elimination activity in catalysis. DNA is bound by residues His-90, Arg-109, and Lys-150. The segment at 235 to 269 adopts an FPG-type zinc-finger fold; that stretch reads QVYGRAGEPCRACGTPIESAKHGQRSTFFCPRCQR. Arg-259 (proton donor; for delta-elimination activity) is an active-site residue.

It belongs to the FPG family. As to quaternary structure, monomer. It depends on Zn(2+) as a cofactor.

It catalyses the reaction Hydrolysis of DNA containing ring-opened 7-methylguanine residues, releasing 2,6-diamino-4-hydroxy-5-(N-methyl)formamidopyrimidine.. The enzyme catalyses 2'-deoxyribonucleotide-(2'-deoxyribose 5'-phosphate)-2'-deoxyribonucleotide-DNA = a 3'-end 2'-deoxyribonucleotide-(2,3-dehydro-2,3-deoxyribose 5'-phosphate)-DNA + a 5'-end 5'-phospho-2'-deoxyribonucleoside-DNA + H(+). Functionally, involved in base excision repair of DNA damaged by oxidation or by mutagenic agents. Acts as a DNA glycosylase that recognizes and removes damaged bases. Has a preference for oxidized purines, such as 7,8-dihydro-8-oxoguanine (8-oxoG). Has AP (apurinic/apyrimidinic) lyase activity and introduces nicks in the DNA strand. Cleaves the DNA backbone by beta-delta elimination to generate a single-strand break at the site of the removed base with both 3'- and 5'-phosphates. The sequence is that of Formamidopyrimidine-DNA glycosylase from Serratia proteamaculans (strain 568).